Consider the following 289-residue polypeptide: MKTQQSYQQRDDKGTLYLVATPIGNLEDVTFRAIRTLKEADQIAAEDTRQTKKLLNHFDIATKLVSYHEHNKETMGKRLIDDLIEGRTIALVSDAGMPAISDPGYELVVSAIKEGIAVIPIPGANAAVTALIASGLPTESFQFIGFLPRQKKQRRQALEETKPTKATLIFYESPHRLKDTLDDMLLILGNRHVSICRELTKTYEEFLRGTLEEAVHWAREATIKGEFCLIVEGNGEKVEPEEVWWESLSPVQHVEHYIALGFRSKEAIKQVATDRGVPKRDIYNIYHQE.

This sequence belongs to the methyltransferase superfamily. RsmI family.

It is found in the cytoplasm. The catalysed reaction is cytidine(1402) in 16S rRNA + S-adenosyl-L-methionine = 2'-O-methylcytidine(1402) in 16S rRNA + S-adenosyl-L-homocysteine + H(+). Its function is as follows. Catalyzes the 2'-O-methylation of the ribose of cytidine 1402 (C1402) in 16S rRNA. This is Ribosomal RNA small subunit methyltransferase I from Halalkalibacterium halodurans (strain ATCC BAA-125 / DSM 18197 / FERM 7344 / JCM 9153 / C-125) (Bacillus halodurans).